The primary structure comprises 353 residues: Probable arabinan endo-1,5-alpha-L-arabinosidase B (353 aa).

The first 16 residues, 1–16, serve as a signal peptide directing secretion; that stretch reads MVLVATLFSLFTVSLC. Asp-39 (proton acceptor) is an active-site residue. Asn-194 is a glycosylation site (N-linked (GlcNAc...) asparagine). Residues 202-227 are disordered; it reads HLAKHPKTERVNSQDQNPDPLCRDSS. Glu-233 acts as the Proton donor in catalysis.

The protein belongs to the glycosyl hydrolase 43 family.

The protein localises to the secreted. The enzyme catalyses Endohydrolysis of (1-&gt;5)-alpha-arabinofuranosidic linkages in (1-&gt;5)-arabinans.. It participates in glycan metabolism; L-arabinan degradation. Functionally, endo-1,5-alpha-L-arabinanase involved in degradation of pectin. Its preferred substrate is linear 1,5-alpha-L-arabinan. The protein is Probable arabinan endo-1,5-alpha-L-arabinosidase B (abnB) of Aspergillus oryzae (strain ATCC 42149 / RIB 40) (Yellow koji mold).